We begin with the raw amino-acid sequence, 640 residues long: Dextranase (640 aa).

Residues 1 to 32 form the signal peptide; the sequence is MPGTGLGRLAKRMTAAAAVFFISTSAVLPAQA. Residues 33–49 constitute a propeptide that is removed on maturation; it reads ATAPAAAPPGVPAALKA. Residues 248–269 form a disordered region; it reads EQKERLVPTEESGSIHYPEPGE.

The protein belongs to the glycosyl hydrolase 49 family.

It is found in the secreted. The catalysed reaction is Endohydrolysis of (1-&gt;6)-alpha-D-glucosidic linkages in dextran.. In terms of biological role, efficiently decomposes water-insoluble glucan as well as dextran. This chain is Dextranase, found in Arthrobacter sp. (strain CB-8).